The primary structure comprises 371 residues: Lombricine kinase (371 aa).

The Phosphagen kinase N-terminal domain occupies 1-86 (MPKFTARQNF…FDAVINEKHG (86 aa)). Residues 113–355 (YVKSARIRTG…GKLIEYEKLL (243 aa)) form the Phosphagen kinase C-terminal domain. Residues 116-120 (SARIR), His-179, Arg-224, Arg-280, 308-313 (RGTGGE), and Asp-323 each bind ATP.

This sequence belongs to the ATP:guanido phosphotransferase family. As to quaternary structure, homodimer.

It carries out the reaction L-lombricine + ATP = N-phospho-L-lombricine + ADP + H(+). The polypeptide is Lombricine kinase (Eisenia fetida (Red wiggler worm)).